Reading from the N-terminus, the 132-residue chain is Small ribosomal subunit protein uS8c (132 aa).

Belongs to the universal ribosomal protein uS8 family. In terms of assembly, part of the 30S ribosomal subunit.

The protein resides in the plastid. It localises to the chloroplast. Its function is as follows. One of the primary rRNA binding proteins, it binds directly to 16S rRNA central domain where it helps coordinate assembly of the platform of the 30S subunit. In Thalassiosira pseudonana (Marine diatom), this protein is Small ribosomal subunit protein uS8c (rps8).